A 196-amino-acid polypeptide reads, in one-letter code: Large ribosomal subunit protein bL25 (196 aa).

The protein belongs to the bacterial ribosomal protein bL25 family. CTC subfamily. Part of the 50S ribosomal subunit; part of the 5S rRNA/L5/L18/L25 subcomplex. Contacts the 5S rRNA. Binds to the 5S rRNA independently of L5 and L18.

Functionally, this is one of the proteins that binds to the 5S RNA in the ribosome where it forms part of the central protuberance. This chain is Large ribosomal subunit protein bL25, found in Bacteroides fragilis (strain ATCC 25285 / DSM 2151 / CCUG 4856 / JCM 11019 / LMG 10263 / NCTC 9343 / Onslow / VPI 2553 / EN-2).